Here is a 45-residue protein sequence, read N- to C-terminus: Large ribosomal subunit protein bL34 (45 aa).

The protein belongs to the bacterial ribosomal protein bL34 family.

The chain is Large ribosomal subunit protein bL34 from Salinispora tropica (strain ATCC BAA-916 / DSM 44818 / JCM 13857 / NBRC 105044 / CNB-440).